A 190-amino-acid chain; its full sequence is MNRYLLTTLSAPLLALFFSFSLQAAMLSQEIKSGWDTFTGNVQQTWQQPDAIDVYVPAITWHNRWTYDEEHIHRYNERPWGAGGGVSRYDEKGNWHGLYLMAFKDSFNKWEPFGGYGWEATWRPLQDQNFHYGLGYTAGVTARHNWGYYPVPAILPLASIGYGSLNFQMTYIPGTYNNGNVYFAWLRWQF.

The N-terminal stretch at 1–24 (MNRYLLTTLSAPLLALFFSFSLQA) is a signal peptide. Catalysis depends on residues His-62, Asp-105, and Ser-106.

Belongs to the lipid A palmitoyltransferase family. Homodimer.

The protein localises to the cell outer membrane. It carries out the reaction a lipid A + a 1,2-diacyl-sn-glycero-3-phosphocholine = a hepta-acyl lipid A + a 2-acyl-sn-glycero-3-phosphocholine. The enzyme catalyses a lipid IVA + a 1,2-diacyl-sn-glycero-3-phosphocholine = a lipid IVB + a 2-acyl-sn-glycero-3-phosphocholine. The catalysed reaction is a lipid IIA + a 1,2-diacyl-sn-glycero-3-phosphocholine = a lipid IIB + a 2-acyl-sn-glycero-3-phosphocholine. Transfers a fatty acid residue from the sn-1 position of a phospholipid to the N-linked hydroxyfatty acid chain on the proximal unit of lipid A or its precursors. This chain is Lipid A acyltransferase PagP, found in Pantoea ananatis (strain LMG 20103).